We begin with the raw amino-acid sequence, 756 residues long: Polyribonucleotide nucleotidyltransferase (756 aa).

Mg(2+) contacts are provided by Asp527 and Asp533. The region spanning 593–652 (PRITTIKVPVDKIGEVIGPKGKMINSITEETGASISIEDDGTVFVGASNGEAAQAAIDKI) is the KH domain. Positions 664–733 (GERFLGTVVK…NRGKISLVLV (70 aa)) constitute an S1 motif domain.

This sequence belongs to the polyribonucleotide nucleotidyltransferase family. Requires Mg(2+) as cofactor.

The protein resides in the cytoplasm. It carries out the reaction RNA(n+1) + phosphate = RNA(n) + a ribonucleoside 5'-diphosphate. Its function is as follows. Involved in mRNA degradation. Catalyzes the phosphorolysis of single-stranded polyribonucleotides processively in the 3'- to 5'-direction. The chain is Polyribonucleotide nucleotidyltransferase from Mycolicibacterium gilvum (strain PYR-GCK) (Mycobacterium gilvum (strain PYR-GCK)).